The chain runs to 446 residues: N-succinylarginine dihydrolase (446 aa).

Substrate-binding positions include 19-28 (AGLSFGNVAS), Asn110, and 137-138 (HR). Residue Glu174 is part of the active site. Arg213 serves as a coordination point for substrate. Residue His249 is part of the active site. Substrate-binding residues include Asp251 and Asn364. Cys370 (nucleophile) is an active-site residue.

This sequence belongs to the succinylarginine dihydrolase family. As to quaternary structure, homodimer.

It carries out the reaction N(2)-succinyl-L-arginine + 2 H2O + 2 H(+) = N(2)-succinyl-L-ornithine + 2 NH4(+) + CO2. Its pathway is amino-acid degradation; L-arginine degradation via AST pathway; L-glutamate and succinate from L-arginine: step 2/5. Functionally, catalyzes the hydrolysis of N(2)-succinylarginine into N(2)-succinylornithine, ammonia and CO(2). This is N-succinylarginine dihydrolase from Burkholderia mallei (strain NCTC 10247).